Here is a 108-residue protein sequence, read N- to C-terminus: UPF0060 membrane protein KPN78578_15550 (108 aa).

The next 4 membrane-spanning stretches (helical) occupy residues 6 to 26, 29 to 49, 61 to 81, and 86 to 106; these read LLFF…WLWL, GATP…VWLL, AAYG…VDGV, and YDWA…AGWG.

This sequence belongs to the UPF0060 family.

Its subcellular location is the cell inner membrane. This Klebsiella pneumoniae subsp. pneumoniae (strain ATCC 700721 / MGH 78578) protein is UPF0060 membrane protein KPN78578_15550.